The chain runs to 774 residues: Lysyl oxidase homolog 2 (774 aa).

The first 25 residues, 1-25 (MERPLCSHLCSCLAMLALLSPLSLA), serve as a signal peptide directing secretion. SRCR domains follow at residues 58-159 (LRLA…VVCS), 188-302 (IRAI…VSCV), 326-425 (VRLR…VRCN), and 435-544 (LRLN…VACS). 9 cysteine pairs are disulfide-bonded: C84/C148, C97/C158, C128/C138, C218/C291, C231/C301, C265/C275, C351/C414, C364/C424, and C395/C405. N-linked (GlcNAc...) asparagine glycosylation is present at N288. N-linked (GlcNAc...) (complex) asparagine glycosylation is present at N455. Disulfide bonds link C464–C530, C477–C543, and C511–C521. The tract at residues 548–751 (PDLVLNAEMV…WMYNCHIGGS (204 aa)) is lysyl-oxidase like. D549 and L550 together coordinate Ca(2+). 4 cysteine pairs are disulfide-bonded: C573-C625, C579-C695, C657-C673, and C663-C685. The Cu cation site is built by H626, H628, and H630. N-linked (GlcNAc...) (complex) asparagine glycosylation occurs at N644. The lysine tyrosylquinone (Lys-Tyr) cross-link spans 653–689 (KASFCLEDTECEGDIQKNYECANFGDQGITMGCWDMY). The residue at position 689 (Y689) is a 2',4',5'-topaquinone. Ca(2+)-binding residues include E722, D724, N727, and N728. C732 and C746 form a disulfide bridge.

It belongs to the lysyl oxidase family. Component of some chromatin repressor complex. Interacts with SNAI1. Interacts with TAF10. Interacts with HSPA5. Interacts with EFEMP2. Cu cation is required as a cofactor. It depends on lysine tyrosylquinone residue as a cofactor. The lysine tyrosylquinone cross-link (LTQ) is generated by condensation of the epsilon-amino group of a lysine with a topaquinone produced by oxidation of tyrosine. Post-translationally, N-glycosylated. N-glycosylation on Asn-455 and Asn-644 may be essential for proper folding and secretion; may be composed of a fucosylated carbohydrates attached to a trimannose N-linked glycan core. As to expression, expressed in many tissues. Highest expression in reproductive tissues, placenta, uterus and prostate. In esophageal epithelium, expressed in the basal, prickle and granular cell layers. Up-regulated in a number of cancers cells and tissues.

Its subcellular location is the secreted. It localises to the extracellular space. It is found in the extracellular matrix. The protein resides in the basement membrane. The protein localises to the nucleus. Its subcellular location is the chromosome. It localises to the endoplasmic reticulum. It catalyses the reaction L-lysyl-[protein] + O2 + H2O = (S)-2-amino-6-oxohexanoyl-[protein] + H2O2 + NH4(+). According to some reports, it is inhibited by beta-aminopropionitrile (BAPN). According to another report, it is not inhibited by beta-aminopropionitrile (BAPN). Specifically inhibited by a mouse monoclonal antibody AB0023, inhibition occurs in a non-competitive manner. Functionally, mediates the post-translational oxidative deamination of lysine residues on target proteins leading to the formation of deaminated lysine (allysine). Acts as a transcription corepressor and specifically mediates deamination of trimethylated 'Lys-4' of histone H3 (H3K4me3), a specific tag for epigenetic transcriptional activation. Shows no activity against histone H3 when it is trimethylated on 'Lys-9' (H3K9me3) or 'Lys-27' (H3K27me3) or when 'Lys-4' is monomethylated (H3K4me1) or dimethylated (H3K4me2). Also mediates deamination of methylated TAF10, a member of the transcription factor IID (TFIID) complex, which induces release of TAF10 from promoters, leading to inhibition of TFIID-dependent transcription. LOXL2-mediated deamination of TAF10 results in transcriptional repression of genes required for embryonic stem cell pluripotency including POU5F1/OCT4, NANOG, KLF4 and SOX2. Involved in epithelial to mesenchymal transition (EMT) via interaction with SNAI1 and participates in repression of E-cadherin CDH1, probably by mediating deamination of histone H3. During EMT, involved with SNAI1 in negatively regulating pericentromeric heterochromatin transcription. SNAI1 recruits LOXL2 to pericentromeric regions to oxidize histone H3 and repress transcription which leads to release of heterochromatin component CBX5/HP1A, enabling chromatin reorganization and acquisition of mesenchymal traits. Interacts with the endoplasmic reticulum protein HSPA5 which activates the IRE1-XBP1 pathway of the unfolded protein response, leading to expression of several transcription factors involved in EMT and subsequent EMT induction. Involved in E-cadherin repression following hypoxia, a hallmark of EMT believed to amplify tumor aggressiveness, suggesting that it may play a role in tumor progression. When secreted into the extracellular matrix, promotes cross-linking of extracellular matrix proteins by mediating oxidative deamination of peptidyl lysine residues in precursors to fibrous collagen and elastin. Acts as a regulator of sprouting angiogenesis, probably via collagen IV scaffolding. Acts as a regulator of chondrocyte differentiation, probably by regulating expression of factors that control chondrocyte differentiation. The polypeptide is Lysyl oxidase homolog 2 (LOXL2) (Homo sapiens (Human)).